The chain runs to 748 residues: MEIRRPSRHGNHPDRTYQRTYKACISCRQRKAKCDLGTGPDGLPLGPPCAKCRREQKPCLFDEKRAWERVKKRGTQSTSNLANSMMRTVVSSGNDALNILFEAANAQSQEDSMIESDSLPETEQHRSGHPVTSEGSSNQIDLTVPPDVLEKAMRPVELSHVSKDVLSTWEACRFVRMGWFTAREAVTFIDLFFKNMSILSPVLTDFYADHKNHRWLIAHDPVLCCTILMISSRYHVLPGVGGQSRNFFIHHRLWQHCQQLVTRLIFGQELSSQPKIRNIGTIEALLLMSDWHPRSLHFPPESDGWDSDLVTIDLESTEYGDDGSNSSAKRWAKDMSEPAKRSDQMSWMLLGSALSLAHELGIYETGDKARDAFVAYERFMTKDQMRLRRQRAQRLLYVYINQLAWRIGCVSLMPQGLSHSILNRQTSRELSQYGEEWLTFMDSWMDLTKLAKSVTDMFFPSVTFARQQLQSGRYIDLLDHFRPLLDKWKERYLQPQLHDKPFYDDIFIEYHFVRVYTHSVGMQAVVERAIADGNADEEEVRPMNIDPIDYEYIQEVIDGCCQILEKVTQLADIGALRFSPVRIFVRITSASIFLMKALSLGARQAKLRESLDVLERTIQALRSNALDDIHLSTRYATLLETHVSRLRRHLVASCKSLKRRRESTTRHSMVPPSYASATSDEHAPLITNPPVPQNMSDMGFTPSLNDIAADDWLSLPFDPSMAPFSISSGGQFPAYEGGGLNFLWNLPS.

Positions 24–59 (CISCRQRKAKCDLGTGPDGLPLGPPCAKCRREQKPC) form a DNA-binding region, zn(2)-C6 fungal-type. Disordered stretches follow at residues 108-142 (SQED…QIDL) and 661-683 (REST…DEHA).

Its subcellular location is the nucleus. In terms of biological role, transcription factor; part of the L-tyrosine degradation gene cluster that mediates the biosynthesis of the brownish pigment pyomelanin as an alternative melanin. Acts as a transcriptional activator for the genes of the tyrosine degradation cluster. The chain is Transcription factor hmgR from Aspergillus fumigatus (strain ATCC MYA-4609 / CBS 101355 / FGSC A1100 / Af293) (Neosartorya fumigata).